The sequence spans 160 residues: Transcription elongation factor GreA (160 aa).

A coiled-coil region spans residues 14–38; the sequence is IKAELASLKKERPEVIKAIAEAREE.

It belongs to the GreA/GreB family.

In terms of biological role, necessary for efficient RNA polymerase transcription elongation past template-encoded arresting sites. The arresting sites in DNA have the property of trapping a certain fraction of elongating RNA polymerases that pass through, resulting in locked ternary complexes. Cleavage of the nascent transcript by cleavage factors such as GreA or GreB allows the resumption of elongation from the new 3'terminus. GreA releases sequences of 2 to 3 nucleotides. The chain is Transcription elongation factor GreA from Maridesulfovibrio salexigens (strain ATCC 14822 / DSM 2638 / NCIMB 8403 / VKM B-1763) (Desulfovibrio salexigens).